Reading from the N-terminus, the 205-residue chain is Large ribosomal subunit protein uL3c (205 aa).

The disordered stretch occupies residues 130–150; it reads RGPMSHGSKNHRQPGSIGAGT.

It belongs to the universal ribosomal protein uL3 family. As to quaternary structure, part of the 50S ribosomal subunit.

The protein localises to the plastid. It is found in the chloroplast. Its function is as follows. One of the primary rRNA binding proteins, it binds directly near the 3'-end of the 23S rRNA, where it nucleates assembly of the 50S subunit. This is Large ribosomal subunit protein uL3c (rpl3) from Gracilaria tenuistipitata var. liui (Red alga).